A 502-amino-acid polypeptide reads, in one-letter code: Tryptophan decarboxylase TDC1 (502 aa).

The segment covering 1-18 has biased composition (polar residues); it reads MGSLDSNYDTESPASVGQ. The segment at 1–21 is disordered; sequence MGSLDSNYDTESPASVGQFNP. At Lys319 the chain carries N6-(pyridoxal phosphate)lysine.

Belongs to the group II decarboxylase family. Requires pyridoxal 5'-phosphate as cofactor. As to expression, highly expressed in apex. Expressed in young stem and bark tissues. Expressed at low levels in leaves, fruits and seeds.

It carries out the reaction L-tryptophan + H(+) = tryptamine + CO2. Functionally, involved in the biosynthesis of tryptamine. Supplies tryptamine for the indole moiety of camptothecin (CPT), an anti-cancer monoterpene alkaloid. Represents a key step in monoterpene indole alkaloid biosynthesis. Is specific for tryptophan, and inactive against tyrosine, phenylalanine and 3,4-dihydroxyphenylalanine (dopa). In Camptotheca acuminata (Happy tree), this protein is Tryptophan decarboxylase TDC1.